We begin with the raw amino-acid sequence, 210 residues long: Orotate phosphoribosyltransferase (210 aa).

5-phospho-alpha-D-ribose 1-diphosphate-binding positions include Arg-96, Lys-100, His-102, and Glu-122–Ser-130. Residue Ser-126 coordinates orotate.

The protein belongs to the purine/pyrimidine phosphoribosyltransferase family. PyrE subfamily. Homodimer. It depends on Mg(2+) as a cofactor.

It carries out the reaction orotidine 5'-phosphate + diphosphate = orotate + 5-phospho-alpha-D-ribose 1-diphosphate. The protein operates within pyrimidine metabolism; UMP biosynthesis via de novo pathway; UMP from orotate: step 1/2. In terms of biological role, catalyzes the transfer of a ribosyl phosphate group from 5-phosphoribose 1-diphosphate to orotate, leading to the formation of orotidine monophosphate (OMP). The sequence is that of Orotate phosphoribosyltransferase from Streptococcus pneumoniae (strain ATCC BAA-255 / R6).